A 388-amino-acid polypeptide reads, in one-letter code: Succinate--CoA ligase [ADP-forming] subunit beta (388 aa).

In terms of domain architecture, ATP-grasp spans 9-244; it reads KQLFAEYGLP…PSQEDEREAH (236 aa). ATP is bound by residues lysine 46, 53–55, glutamate 99, threonine 102, and glutamate 107; that span reads GRG. Mg(2+)-binding residues include asparagine 199 and aspartate 213. Substrate is bound by residues asparagine 264 and 321-323; that span reads GIV.

Belongs to the succinate/malate CoA ligase beta subunit family. As to quaternary structure, heterotetramer of two alpha and two beta subunits. The cofactor is Mg(2+).

It catalyses the reaction succinate + ATP + CoA = succinyl-CoA + ADP + phosphate. It carries out the reaction GTP + succinate + CoA = succinyl-CoA + GDP + phosphate. The protein operates within carbohydrate metabolism; tricarboxylic acid cycle; succinate from succinyl-CoA (ligase route): step 1/1. Its function is as follows. Succinyl-CoA synthetase functions in the citric acid cycle (TCA), coupling the hydrolysis of succinyl-CoA to the synthesis of either ATP or GTP and thus represents the only step of substrate-level phosphorylation in the TCA. The beta subunit provides nucleotide specificity of the enzyme and binds the substrate succinate, while the binding sites for coenzyme A and phosphate are found in the alpha subunit. This is Succinate--CoA ligase [ADP-forming] subunit beta from Colwellia psychrerythraea (strain 34H / ATCC BAA-681) (Vibrio psychroerythus).